Consider the following 379-residue polypeptide: Glucose-1-phosphate adenylyltransferase (379 aa).

Alpha-D-glucose 1-phosphate is bound by residues G164, 179–180 (EK), and S190.

The protein belongs to the bacterial/plant glucose-1-phosphate adenylyltransferase family. As to quaternary structure, homotetramer.

The catalysed reaction is alpha-D-glucose 1-phosphate + ATP + H(+) = ADP-alpha-D-glucose + diphosphate. It participates in glycan biosynthesis; glycogen biosynthesis. Involved in the biosynthesis of ADP-glucose, a building block required for the elongation reactions to produce glycogen. Catalyzes the reaction between ATP and alpha-D-glucose 1-phosphate (G1P) to produce pyrophosphate and ADP-Glc. The polypeptide is Glucose-1-phosphate adenylyltransferase (Lactiplantibacillus plantarum (strain ATCC BAA-793 / NCIMB 8826 / WCFS1) (Lactobacillus plantarum)).